A 428-amino-acid chain; its full sequence is uncharacterized protein (428 aa).

The disordered stretch occupies residues 1 to 49 (MRTQTFPPSSSSSRTTHPKKNRHSSNSSSMALVTPAKSSTGAAPKQSSQ). A compositionally biased stretch (polar residues) spans 24–49 (SSNSSSMALVTPAKSSTGAAPKQSSQ).

This is an uncharacterized protein from Caenorhabditis elegans.